The chain runs to 409 residues: Dual-specificity RNA methyltransferase RlmN (409 aa).

E121 (proton acceptor) is an active-site residue. The Radical SAM core domain occupies E127–L376. Residues C134 and C379 are joined by a disulfide bond. [4Fe-4S] cluster contacts are provided by C141, C145, and C148. S-adenosyl-L-methionine-binding positions include G205 to E206, S237, S259 to H261, and N336. C379 functions as the S-methylcysteine intermediate in the catalytic mechanism.

Belongs to the radical SAM superfamily. RlmN family. [4Fe-4S] cluster is required as a cofactor.

It is found in the cytoplasm. It carries out the reaction adenosine(2503) in 23S rRNA + 2 reduced [2Fe-2S]-[ferredoxin] + 2 S-adenosyl-L-methionine = 2-methyladenosine(2503) in 23S rRNA + 5'-deoxyadenosine + L-methionine + 2 oxidized [2Fe-2S]-[ferredoxin] + S-adenosyl-L-homocysteine. The catalysed reaction is adenosine(37) in tRNA + 2 reduced [2Fe-2S]-[ferredoxin] + 2 S-adenosyl-L-methionine = 2-methyladenosine(37) in tRNA + 5'-deoxyadenosine + L-methionine + 2 oxidized [2Fe-2S]-[ferredoxin] + S-adenosyl-L-homocysteine. Its function is as follows. Specifically methylates position 2 of adenine 2503 in 23S rRNA and position 2 of adenine 37 in tRNAs. m2A2503 modification seems to play a crucial role in the proofreading step occurring at the peptidyl transferase center and thus would serve to optimize ribosomal fidelity. The chain is Dual-specificity RNA methyltransferase RlmN from Rhizobium etli (strain ATCC 51251 / DSM 11541 / JCM 21823 / NBRC 15573 / CFN 42).